A 463-amino-acid polypeptide reads, in one-letter code: A-type ATP synthase subunit B (463 aa).

It belongs to the ATPase alpha/beta chains family. Has multiple subunits with at least A(3), B(3), C, D, E, F, H, I and proteolipid K(x).

Its subcellular location is the cell membrane. Its function is as follows. Component of the A-type ATP synthase that produces ATP from ADP in the presence of a proton gradient across the membrane. The B chain is a regulatory subunit. This is A-type ATP synthase subunit B from Methanothermobacter thermautotrophicus (strain ATCC 29096 / DSM 1053 / JCM 10044 / NBRC 100330 / Delta H) (Methanobacterium thermoautotrophicum).